A 445-amino-acid polypeptide reads, in one-letter code: Tubulin beta-3 chain (445 aa).

GTP-binding residues include Q11, E69, S138, G142, T143, G144, N204, and N226. Residue E69 participates in Mg(2+) binding. The segment at 421 to 445 is disordered; the sequence is EYQQYQDATADEEEEYDEEEEEEAA. A compositionally biased stretch (acidic residues) spans 429–445; it reads TADEEEEYDEEEEEEAA.

Belongs to the tubulin family. As to quaternary structure, dimer of alpha and beta chains. A typical microtubule is a hollow water-filled tube with an outer diameter of 25 nm and an inner diameter of 15 nM. Alpha-beta heterodimers associate head-to-tail to form protofilaments running lengthwise along the microtubule wall with the beta-tubulin subunit facing the microtubule plus end conferring a structural polarity. Microtubules usually have 13 protofilaments but different protofilament numbers can be found in some organisms and specialized cells. The cofactor is Mg(2+).

It is found in the cytoplasm. Its subcellular location is the cytoskeleton. Tubulin is the major constituent of microtubules, a cylinder consisting of laterally associated linear protofilaments composed of alpha- and beta-tubulin heterodimers. Microtubules grow by the addition of GTP-tubulin dimers to the microtubule end, where a stabilizing cap forms. Below the cap, tubulin dimers are in GDP-bound state, owing to GTPase activity of alpha-tubulin. This chain is Tubulin beta-3 chain (TUBB3), found in Triticum aestivum (Wheat).